A 92-amino-acid polypeptide reads, in one-letter code: Small ribosomal subunit protein bS18A (92 aa).

This sequence belongs to the bacterial ribosomal protein bS18 family. Part of the 30S ribosomal subunit. Forms a tight heterodimer with protein bS6.

Binds as a heterodimer with protein bS6 to the central domain of the 16S rRNA, where it helps stabilize the platform of the 30S subunit. This chain is Small ribosomal subunit protein bS18A, found in Cupriavidus pinatubonensis (strain JMP 134 / LMG 1197) (Cupriavidus necator (strain JMP 134)).